The chain runs to 158 residues: UPF0311 protein CA_C3321 (158 aa).

It belongs to the UPF0311 family.

This is UPF0311 protein CA_C3321 from Clostridium acetobutylicum (strain ATCC 824 / DSM 792 / JCM 1419 / IAM 19013 / LMG 5710 / NBRC 13948 / NRRL B-527 / VKM B-1787 / 2291 / W).